A 530-amino-acid polypeptide reads, in one-letter code: Phosphoenolpyruvate carboxykinase (ATP) (530 aa).

Arginine 59, tyrosine 198, and lysine 204 together coordinate substrate. Residues lysine 204, histidine 223, and 239–247 (GLSGTGKTT) contribute to the ATP site. Mn(2+)-binding residues include lysine 204 and histidine 223. Aspartate 260 contributes to the Mn(2+) binding site. ATP-binding positions include glutamate 288, arginine 325, 440–441 (RI), and threonine 446. Arginine 325 provides a ligand contact to substrate.

Belongs to the phosphoenolpyruvate carboxykinase (ATP) family. Mn(2+) is required as a cofactor.

The protein localises to the cytoplasm. It catalyses the reaction oxaloacetate + ATP = phosphoenolpyruvate + ADP + CO2. It functions in the pathway carbohydrate biosynthesis; gluconeogenesis. Involved in the gluconeogenesis. Catalyzes the conversion of oxaloacetate (OAA) to phosphoenolpyruvate (PEP) through direct phosphoryl transfer between the nucleoside triphosphate and OAA. The polypeptide is Phosphoenolpyruvate carboxykinase (ATP) (Azobacteroides pseudotrichonymphae genomovar. CFP2).